The chain runs to 360 residues: Peptide chain release factor 1 (360 aa).

Residue Q235 is modified to N5-methylglutamine. The disordered stretch occupies residues 284 to 313; the sequence is AKRQQAEASTRRNLLGSGDRSDRNRTYNFP.

Belongs to the prokaryotic/mitochondrial release factor family. Methylated by PrmC. Methylation increases the termination efficiency of RF1.

It localises to the cytoplasm. Functionally, peptide chain release factor 1 directs the termination of translation in response to the peptide chain termination codons UAG and UAA. This chain is Peptide chain release factor 1, found in Citrobacter koseri (strain ATCC BAA-895 / CDC 4225-83 / SGSC4696).